The sequence spans 341 residues: tRNA N6-adenosine threonylcarbamoyltransferase (341 aa).

Positions 113 and 117 each coordinate Fe cation. Substrate contacts are provided by residues 136–140 (IISGG), aspartate 169, glycine 182, and asparagine 280. Position 308 (aspartate 308) interacts with Fe cation.

This sequence belongs to the KAE1 / TsaD family. Requires Fe(2+) as cofactor.

It is found in the cytoplasm. The catalysed reaction is L-threonylcarbamoyladenylate + adenosine(37) in tRNA = N(6)-L-threonylcarbamoyladenosine(37) in tRNA + AMP + H(+). Required for the formation of a threonylcarbamoyl group on adenosine at position 37 (t(6)A37) in tRNAs that read codons beginning with adenine. Is involved in the transfer of the threonylcarbamoyl moiety of threonylcarbamoyl-AMP (TC-AMP) to the N6 group of A37, together with TsaE and TsaB. TsaD likely plays a direct catalytic role in this reaction. In Anaplasma marginale (strain St. Maries), this protein is tRNA N6-adenosine threonylcarbamoyltransferase.